We begin with the raw amino-acid sequence, 113 residues long: MDLEESRPKGVFECELCRLSVPYTYFGQRPPNSHSVVLLEQCFITKDPFTPDKEKFLILGSPCSLCEKAVCVGTECSLFYSKRFCLPCVLQHRDDFPPEIQQEVDKRKAQKKS.

This sequence belongs to the CDPF1 family.

This is Cysteine-rich DPF motif domain-containing protein 1 (cdpf1) from Xenopus laevis (African clawed frog).